A 193-amino-acid polypeptide reads, in one-letter code: Pyridoxal 5'-phosphate synthase subunit PdxT (193 aa).

Residue 50-52 participates in L-glutamine binding; the sequence is GES. C82 functions as the Nucleophile in the catalytic mechanism. L-glutamine is bound by residues R109 and 136–137; that span reads IR. Active-site charge relay system residues include H172 and E174.

The protein belongs to the glutaminase PdxT/SNO family. In terms of assembly, in the presence of PdxS, forms a dodecamer of heterodimers. Only shows activity in the heterodimer.

The catalysed reaction is aldehydo-D-ribose 5-phosphate + D-glyceraldehyde 3-phosphate + L-glutamine = pyridoxal 5'-phosphate + L-glutamate + phosphate + 3 H2O + H(+). The enzyme catalyses L-glutamine + H2O = L-glutamate + NH4(+). The protein operates within cofactor biosynthesis; pyridoxal 5'-phosphate biosynthesis. In terms of biological role, catalyzes the hydrolysis of glutamine to glutamate and ammonia as part of the biosynthesis of pyridoxal 5'-phosphate. The resulting ammonia molecule is channeled to the active site of PdxS. The sequence is that of Pyridoxal 5'-phosphate synthase subunit PdxT from Streptococcus pneumoniae (strain JJA).